The chain runs to 1073 residues: Probable inorganic carbon transporter subunit DabA 2 (1073 aa).

Positions 1-20 are enriched in polar residues; sequence MSSGNTSSQNHSPVNNQPTR. Residues 1–35 form a disordered region; the sequence is MSSGNTSSQNHSPVNNQPTRLKSPLPALHKDTQPN. Residues Cys-535, Asp-537, His-721, and Cys-736 each contribute to the Zn(2+) site.

The protein belongs to the inorganic carbon transporter (TC 9.A.2) DabA family. As to quaternary structure, forms a complex with DabB. It depends on Zn(2+) as a cofactor.

It localises to the cell inner membrane. Functionally, part of an energy-coupled inorganic carbon pump. The protein is Probable inorganic carbon transporter subunit DabA 2 of Rhodopirellula baltica (strain DSM 10527 / NCIMB 13988 / SH1).